A 258-amino-acid polypeptide reads, in one-letter code: MHMLFYKSYVREFIGEFLGTFVLMFLGEGATANFHTTGLSGDWYKLCLGWGLAVFFGILVSAKLSGAHLNLAVSIGLSSINKFDLKKIPVYFFAQLLGAFVGTSTVYGLYHGFISNSKIPQFAWETSRNPSISLTGAFFNELILTGILLLVILVVVDENICGKFHILKLSSVVGLIILCIGITFGGNTGFALNPSRDLGSRFLSLIAYGKDTFTKDNFYFWVPLVAPCVGSVVFCQFYDKVICPLVDLANNEKDGVDL.

Over 1–11 the chain is Cytoplasmic; it reads MHMLFYKSYVR. Residues 12–32 form a helical membrane-spanning segment; sequence EFIGEFLGTFVLMFLGEGATA. Residues 33–45 are Extracellular-facing; it reads NFHTTGLSGDWYK. A helical transmembrane segment spans residues 46–66; the sequence is LCLGWGLAVFFGILVSAKLSG. Residues Gly-66, Ala-67, and Asn-70 each coordinate glycerol. Residues 67–87 lie on the Cytoplasmic side of the membrane; it reads AHLNLAVSIGLSSINKFDLKK. Residues 88-108 form a helical membrane-spanning segment; the sequence is IPVYFFAQLLGAFVGTSTVYG. At 109–135 the chain is on the extracellular side; sequence LYHGFISNSKIPQFAWETSRNPSISLT. Ser-127 lines the glycerol pocket. A helical transmembrane segment spans residues 136–156; sequence GAFFNELILTGILLLVILVVV. Residues 157–171 are Cytoplasmic-facing; the sequence is DENICGKFHILKLSS. Residues 172-192 traverse the membrane as a helical segment; it reads VVGLIILCIGITFGGNTGFAL. Residues Gly-189, Phe-190, Asn-193, and Arg-196 each contribute to the glycerol site. The Extracellular portion of the chain corresponds to 193–217; that stretch reads NPSRDLGSRFLSLIAYGKDTFTKDN. The chain crosses the membrane as a helical span at residues 218 to 238; it reads FYFWVPLVAPCVGSVVFCQFY. At 239-258 the chain is on the cytoplasmic side; it reads DKVICPLVDLANNEKDGVDL.

Belongs to the MIP/aquaporin (TC 1.A.8) family. In terms of assembly, homotetramer.

Its subcellular location is the cell membrane. The enzyme catalyses H2O(in) = H2O(out). It carries out the reaction glycerol(in) = glycerol(out). The catalysed reaction is urea(in) = urea(out). It catalyses the reaction NH4(+)(in) = NH4(+)(out). The enzyme catalyses methylamine(out) = methylamine(in). It carries out the reaction formamide(out) = formamide(in). In terms of biological role, mediates water and glycerol transport across the cell membrane. Permeable to sugar alcohols of up to five carbons and urea. Permeable to ammonia, methylamine and formamide. This Plasmodium falciparum (isolate 3D7) protein is Aquaglyceroporin.